A 120-amino-acid chain; its full sequence is Small ribosomal subunit protein bS6 (120 aa).

The segment covering 97–112 has biased composition (polar residues); that stretch reads SNEPSPILKNQSTENT. Residues 97–120 form a disordered region; it reads SNEPSPILKNQSTENTPVIDVTAN.

Belongs to the bacterial ribosomal protein bS6 family.

Its function is as follows. Binds together with bS18 to 16S ribosomal RNA. The protein is Small ribosomal subunit protein bS6 of Rickettsia bellii (strain OSU 85-389).